A 49-amino-acid polypeptide reads, in one-letter code: Large ribosomal subunit protein bL33 (49 aa).

It belongs to the bacterial ribosomal protein bL33 family.

The chain is Large ribosomal subunit protein bL33 from Syntrophus aciditrophicus (strain SB).